The primary structure comprises 113 residues: U11-theraphotoxin-Hhn1u (113 aa).

An N-terminal signal peptide occupies residues 1 to 21; sequence MNTVRVTFLLVFVLAVSLGQA. Positions 22 to 74 are excised as a propeptide; the sequence is DKDENRMEMQEKTEQGKSYLDFAENLLLQKLEELEAKLLEEDSEESRNSRQKR. Disulfide bonds link C75-C90, C82-C95, and C89-C110.

This sequence belongs to the neurotoxin 14 (magi-1) family. 01 (HNTX-16) subfamily. As to expression, expressed by the venom gland.

It is found in the secreted. In terms of biological role, probable ion channel inhibitor. In Cyriopagopus hainanus (Chinese bird spider), this protein is U11-theraphotoxin-Hhn1u.